The chain runs to 438 residues: Serine--tRNA ligase (438 aa).

An L-serine-binding site is contributed by 235–237; the sequence is TAE. Residues 266–268 and Val-282 contribute to the ATP site; that span reads RKE. Position 289 (Glu-289) interacts with L-serine. 355–358 is a binding site for ATP; the sequence is ELVS. Thr-393 contacts L-serine.

It belongs to the class-II aminoacyl-tRNA synthetase family. Type-1 seryl-tRNA synthetase subfamily. As to quaternary structure, homodimer. The tRNA molecule binds across the dimer.

The enzyme catalyses tRNA(Ser) + L-serine + ATP = L-seryl-tRNA(Ser) + AMP + diphosphate + H(+). The catalysed reaction is tRNA(Sec) + L-serine + ATP = L-seryl-tRNA(Sec) + AMP + diphosphate + H(+). Its pathway is aminoacyl-tRNA biosynthesis; selenocysteinyl-tRNA(Sec) biosynthesis; L-seryl-tRNA(Sec) from L-serine and tRNA(Sec): step 1/1. Functionally, catalyzes the attachment of serine to tRNA(Ser). Is also able to aminoacylate tRNA(Sec) with serine, to form the misacylated tRNA L-seryl-tRNA(Sec), which will be further converted into selenocysteinyl-tRNA(Sec). The protein is Serine--tRNA ligase of Helianthus annuus (Common sunflower).